A 403-amino-acid polypeptide reads, in one-letter code: Flagellar hook protein FlgE (403 aa).

It belongs to the flagella basal body rod proteins family.

It is found in the bacterial flagellum basal body. This is Flagellar hook protein FlgE (flgE) from Salmonella typhi.